A 622-amino-acid polypeptide reads, in one-letter code: Kinesin-like protein KIFC1 (622 aa).

The tract at residues 1-88 (MKEALEPAKK…KRPGKRPDWD (88 aa)) is disordered. A compositionally biased stretch (polar residues) spans 32-41 (SSLSQPQGPT). A coiled-coil region spans residues 95–264 (DLTEELKCYR…QELKGNIRVF (170 aa)). The Kinesin motor domain maps to 260-612 (NIRVFCRVRP…LRFASKVNQC (353 aa)). A disordered region spans residues 279 to 323 (PGFLLFPHGPAGPSDPPTRLSLSRSDDRRSTLTRAPAPTTRHDFS). Phosphothreonine is present on T309. Residue 360 to 367 (GQTGSGKT) coordinates ATP.

Belongs to the TRAFAC class myosin-kinesin ATPase superfamily. Kinesin family. NCD subfamily. In terms of assembly, binds NUBP1 and NUBP2. Interacts with PPP1R42.

The protein localises to the nucleus. The protein resides in the cytoplasm. Its subcellular location is the cytoskeleton. It localises to the microtubule organizing center. It is found in the centrosome. The protein localises to the spindle. The protein resides in the early endosome. In terms of biological role, minus end-directed microtubule-dependent motor required for bipolar spindle formation. May contribute to movement of early endocytic vesicles. Regulates cilium formation and structure. In Cricetulus griseus (Chinese hamster), this protein is Kinesin-like protein KIFC1.